Reading from the N-terminus, the 892-residue chain is MTMTNRDDSEQLAWDFDAPESDGSSAAVVADEGLASLTPGSERWIAALQPTDADAMRLDKVDVASMSAEAAARLWARVAAWVESDQIAYYIDDAPVSSDAAYDARLRCLQSLEAQFPSLDSPQSPTHRVGGTFSNDFASVRHPSRMMSLDDVFSIEELREWYDGVLRGLDWPESKPLPMTCEVKIDGLALNLIYRNGVLEQGLTRGDGVTGEDITLNVRTISTIPQNLAGPEEDIPEFVEIRGEVFMRWDDFNKLNAENEDAGRAPFANPRNAAAGSLRQKDPRITATRRLSFYAHGIGSLRWGAGHAGNGHDVVNDQSEAYELYKKWGVPVSPHNREVTSFKEILDMIDYYGEHRGDIEHALDGIVVKVDDLGLQRSLGATSRAPRWAIAYKYPPEEVNTELLDITVQVGRTGRVTPVAVLKPVYVAGSTVSRTTLHNPFEVERKGVLIGDTVVVRKAGDVIPELVGPVLERRKGREGELRRFVMPTRCPSCGAELAPAKEGDKDIRCPNVESCPAQLTERIINLASRKAFDIEHLGDQSAIALTNPEEDRPDSIDTYAPNITEIVVKPGEEPEPYEPVAGLELPPMQTPVLSSEAGLFSLTSADLKDVRVWREAPIIEIHETVGSNGKIKKVRKRVGGSGLWHQVPAFWTAPTAARKRKEADIDETAEYPQYVVPDDAVVIREEIKVSRGGTSSVQPVYIRPAENTRKMLDEMDKARHADLWRVLVALSIRRLGPPTARTIASAFGTLDAIEHASVDELSQIDGIGSEIAESVVTWFTAAREPGNWRGAVLDAWKAAGVGVGQAQASGLPQTLAGKTVVVTGSLEGFSRDSAKEAIVLRGGKAAGSVSKKTDWVVVGENAGSKAAKAEELGIPMLNEDQFKQLLDTGTVE.

The tract at residues 1 to 23 (MTMTNRDDSEQLAWDFDAPESDG) is disordered. Residues 99–103 (DAAYD), 148–149 (SL), and Glu-182 contribute to the NAD(+) site. Lys-184 acts as the N6-AMP-lysine intermediate in catalysis. NAD(+) is bound by residues Arg-205, Glu-244, Lys-369, and Lys-393. Positions 490, 493, 509, and 515 each coordinate Zn(2+). A BRCT domain is found at 810 to 892 (GLPQTLAGKT…KQLLDTGTVE (83 aa)).

Belongs to the NAD-dependent DNA ligase family. LigA subfamily. Requires Mg(2+) as cofactor. Mn(2+) serves as cofactor.

It carries out the reaction NAD(+) + (deoxyribonucleotide)n-3'-hydroxyl + 5'-phospho-(deoxyribonucleotide)m = (deoxyribonucleotide)n+m + AMP + beta-nicotinamide D-nucleotide.. Its function is as follows. DNA ligase that catalyzes the formation of phosphodiester linkages between 5'-phosphoryl and 3'-hydroxyl groups in double-stranded DNA using NAD as a coenzyme and as the energy source for the reaction. It is essential for DNA replication and repair of damaged DNA. This Bifidobacterium adolescentis (strain ATCC 15703 / DSM 20083 / NCTC 11814 / E194a) protein is DNA ligase.